A 132-amino-acid chain; its full sequence is Interleukin-13 (132 aa).

Positions 1–18 are cleaved as a signal peptide; it reads MALLLTTVIALTCLGGFA. Residues Asn-38, Asn-49, Asn-57, and Asn-72 are each glycosylated (N-linked (GlcNAc...) asparagine). Cystine bridges form between Cys-48-Cys-76 and Cys-64-Cys-90.

The protein belongs to the IL-4/IL-13 family. In terms of assembly, interacts with IL13RA2.

It localises to the secreted. In terms of biological role, cytokine that plays important roles in allergic inflammation and immune response to parasite infection. Synergizes with IL2 in regulating interferon-gamma synthesis. Stimulates B-cell proliferation, and activation of eosinophils, basophils, and mast cells. Plays an important role in controlling IL33 activity by modulating the production of transmembrane and soluble forms of interleukin-1 receptor-like 1/IL1RL1. Displays the capacity to antagonize Th1-driven proinflammatory immune response and downregulates synthesis of many proinflammatory cytokines including IL1, IL6, IL10, IL12 and TNF-alpha through a mechanism that partially involves suppression of NF-kappa-B. Also functions on nonhematopoietic cells, including endothelial cells where it induces vascular cell adhesion protein 1/VCAM1, which is important in the recruitment of eosinophils. Exerts its biological effects through its receptors which comprises the IL4R chain and the IL13RA1 chain, to activate JAK1 and TYK2, leading to the activation of STAT6. Aside from IL13RA1, another receptor IL13RA2 acts as a high affinity decoy for IL13 and mediates internalization and depletion of extracellular IL13. The protein is Interleukin-13 (IL13) of Macaca mulatta (Rhesus macaque).